A 472-amino-acid chain; its full sequence is UDP-glucosyltransferase 103 (472 aa).

H15 serves as the catalytic Proton acceptor. H15 serves as a coordination point for an anthocyanidin. The active-site Charge relay is the D117. Residues A344, Q346, H361, W364, N365, S366, and E369 each contribute to the UDP-alpha-D-glucose site. Residue G384 coordinates an anthocyanidin. UDP-alpha-D-glucose-binding residues include E385 and Q386.

This sequence belongs to the UDP-glycosyltransferase family.

It carries out the reaction (20S)-ginsenoside F1 + UDP-alpha-D-glucose = (20S)-ginsenoside Rg1 + UDP + H(+). The protein operates within secondary metabolite biosynthesis; terpenoid biosynthesis. Functionally, probable component of the triterpene saponins (e.g. ginsenosides) biosynthetic pathway. No detectable activity toward protopanaxatriol (PPT). This chain is UDP-glucosyltransferase 103, found in Panax ginseng (Korean ginseng).